Here is a 213-residue protein sequence, read N- to C-terminus: Ribosomal RNA large subunit methyltransferase E (213 aa).

S-adenosyl-L-methionine contacts are provided by Gly-60, Trp-62, Asp-80, Asp-96, and Asp-121. The active-site Proton acceptor is the Lys-161.

This sequence belongs to the class I-like SAM-binding methyltransferase superfamily. RNA methyltransferase RlmE family.

It is found in the cytoplasm. The enzyme catalyses uridine(2552) in 23S rRNA + S-adenosyl-L-methionine = 2'-O-methyluridine(2552) in 23S rRNA + S-adenosyl-L-homocysteine + H(+). Functionally, specifically methylates the uridine in position 2552 of 23S rRNA at the 2'-O position of the ribose in the fully assembled 50S ribosomal subunit. In Xylella fastidiosa (strain 9a5c), this protein is Ribosomal RNA large subunit methyltransferase E.